The chain runs to 304 residues: Methionyl-tRNA formyltransferase (304 aa).

(6S)-5,6,7,8-tetrahydrofolate is bound at residue 106 to 109; it reads SLLP.

This sequence belongs to the Fmt family.

It catalyses the reaction L-methionyl-tRNA(fMet) + (6R)-10-formyltetrahydrofolate = N-formyl-L-methionyl-tRNA(fMet) + (6S)-5,6,7,8-tetrahydrofolate + H(+). Functionally, attaches a formyl group to the free amino group of methionyl-tRNA(fMet). The formyl group appears to play a dual role in the initiator identity of N-formylmethionyl-tRNA by promoting its recognition by IF2 and preventing the misappropriation of this tRNA by the elongation apparatus. In Thermosipho africanus (strain TCF52B), this protein is Methionyl-tRNA formyltransferase.